We begin with the raw amino-acid sequence, 173 residues long: uncharacterized protein (173 aa).

An N-terminal signal peptide occupies residues 1–25; sequence MPVVTAVGRRRGFAMPWVSTARSGA.

This is an uncharacterized protein from Mycobacterium bovis (strain ATCC BAA-935 / AF2122/97).